Here is a 447-residue protein sequence, read N- to C-terminus: Succinate--CoA ligase [ADP-forming] subunit beta, mitochondrial (447 aa).

A mitochondrion-targeting transit peptide spans 1-34 (MFKLGRNRALASAFAATSRAPLASRLPSVSQQQR). Positions 45–287 (ADLLRQYGIG…TTQEDPDEVR (243 aa)) constitute an ATP-grasp domain. Residues K82, 89-91 (GRG), and E150 each bind ATP. Residues N242 and D256 each contribute to the Mg(2+) site. Substrate contacts are provided by residues N307 and 364–366 (GIV).

This sequence belongs to the succinate/malate CoA ligase beta subunit family. Heterodimer of an alpha and a beta subunit. Requires Mg(2+) as cofactor.

It localises to the mitochondrion. It carries out the reaction succinate + ATP + CoA = succinyl-CoA + ADP + phosphate. The protein operates within carbohydrate metabolism; tricarboxylic acid cycle; succinate from succinyl-CoA (ligase route): step 1/1. Succinyl-CoA synthetase functions in the citric acid cycle (TCA), coupling the hydrolysis of succinyl-CoA to the synthesis of ATP and thus represents the only step of substrate-level phosphorylation in the TCA. The beta subunit provides nucleotide specificity of the enzyme and binds the substrate succinate, while the binding sites for coenzyme A and phosphate are found in the alpha subunit. This is Succinate--CoA ligase [ADP-forming] subunit beta, mitochondrial from Neurospora crassa (strain ATCC 24698 / 74-OR23-1A / CBS 708.71 / DSM 1257 / FGSC 987).